A 126-amino-acid polypeptide reads, in one-letter code: Large ribosomal subunit protein bL12 (126 aa).

This sequence belongs to the bacterial ribosomal protein bL12 family. In terms of assembly, homodimer. Part of the ribosomal stalk of the 50S ribosomal subunit. Forms a multimeric L10(L12)X complex, where L10 forms an elongated spine to which 2 to 4 L12 dimers bind in a sequential fashion. Binds GTP-bound translation factors.

Forms part of the ribosomal stalk which helps the ribosome interact with GTP-bound translation factors. Is thus essential for accurate translation. The polypeptide is Large ribosomal subunit protein bL12 (Methylorubrum populi (strain ATCC BAA-705 / NCIMB 13946 / BJ001) (Methylobacterium populi)).